A 1005-amino-acid chain; its full sequence is Espin-like protein (1005 aa).

9 ANK repeats span residues 1 to 31 (MEKQ…GPGI), 35 to 64 (LGAG…LPGN), 69 to 99 (NGAT…GLQD), 103 to 132 (SGVS…SATL), 136 to 166 (EGAR…SVNR), 170 to 200 (SGAS…DVHL), 204 to 234 (DGMS…GLTA), 238 to 267 (EGAT…PILR), and 270 to 299 (WGGT…DPSL). 2 disordered regions span residues 333 to 444 (LMTP…ERGQ) and 462 to 483 (LGAE…TEQA). The span at 334–346 (MTPPPPPFPPPPL) shows a compositional bias: pro residues. A compositionally biased stretch (polar residues) spans 468–480 (AEAQDNGGSSGPT). The stretch at 517–541 (LQLRRRCQEYESELGRLAAELQALL) forms a coiled coil. 3 disordered regions span residues 616 to 644 (GDEK…AQRQ), 695 to 730 (RSGL…AAAG), and 773 to 795 (LRGQ…PRLG).

As to quaternary structure, interacts with MYO3A (via C-terminus). Interacts with MYO3B (via C-terminus).

It localises to the cell projection. The protein localises to the stereocilium. Functionally, binds to but does not cross-link actin. Required for the formation and maintenance of inner ear hair cell stereocilia and staircase formation. Essential for normal hearing. The sequence is that of Espin-like protein (ESPNL) from Homo sapiens (Human).